Here is a 252-residue protein sequence, read N- to C-terminus: Probable transcriptional regulator SauR (252 aa).

The 63-residue stretch at 6 to 68 (NAAAVRAFRI…AGNRHYECSS (63 aa)) folds into the HTH iclR-type domain. A DNA-binding region (H-T-H motif) is located at residues 28–47 (LAAIVQAIELPKQTVHRILK). In terms of domain architecture, IclR-ED spans 83–252 (PAAARHAILQ…ADEMVKTFCE (170 aa)).

Functionally, may regulate transcription of the sauSTU operon. This Cupriavidus necator (strain ATCC 17699 / DSM 428 / KCTC 22496 / NCIMB 10442 / H16 / Stanier 337) (Ralstonia eutropha) protein is Probable transcriptional regulator SauR (sauR).